We begin with the raw amino-acid sequence, 380 residues long: Putative 8-amino-7-oxononanoate synthase (380 aa).

Arg-22 is a substrate binding site. Residue 109–110 (GY) coordinates pyridoxal 5'-phosphate. His-134 contacts substrate. Residues Ser-182, 207-210 (DEAH), and 238-241 (TLSK) contribute to the pyridoxal 5'-phosphate site. Residue Lys-241 is modified to N6-(pyridoxal phosphate)lysine. Thr-353 contributes to the substrate binding site.

This sequence belongs to the class-II pyridoxal-phosphate-dependent aminotransferase family. BioF subfamily. In terms of assembly, homodimer. Pyridoxal 5'-phosphate is required as a cofactor.

It catalyses the reaction 6-carboxyhexanoyl-[ACP] + L-alanine + H(+) = (8S)-8-amino-7-oxononanoate + holo-[ACP] + CO2. It participates in cofactor biosynthesis; biotin biosynthesis. Its function is as follows. Catalyzes the decarboxylative condensation of pimeloyl-[acyl-carrier protein] and L-alanine to produce 8-amino-7-oxononanoate (AON), [acyl-carrier protein], and carbon dioxide. In Gloeothece citriformis (strain PCC 7424) (Cyanothece sp. (strain PCC 7424)), this protein is Putative 8-amino-7-oxononanoate synthase (bioF).